A 320-amino-acid polypeptide reads, in one-letter code: Beta-ketoacyl-[acyl-carrier-protein] synthase III (320 aa).

Catalysis depends on residues C114 and H247. The ACP-binding stretch occupies residues 248–252; that stretch reads QANRR. N277 is a catalytic residue.

The protein belongs to the thiolase-like superfamily. FabH family. In terms of assembly, homodimer.

Its subcellular location is the cytoplasm. The catalysed reaction is malonyl-[ACP] + acetyl-CoA + H(+) = 3-oxobutanoyl-[ACP] + CO2 + CoA. It functions in the pathway lipid metabolism; fatty acid biosynthesis. In terms of biological role, catalyzes the condensation reaction of fatty acid synthesis by the addition to an acyl acceptor of two carbons from malonyl-ACP. Catalyzes the first condensation reaction which initiates fatty acid synthesis and may therefore play a role in governing the total rate of fatty acid production. Possesses both acetoacetyl-ACP synthase and acetyl transacylase activities. Its substrate specificity determines the biosynthesis of branched-chain and/or straight-chain of fatty acids. The sequence is that of Beta-ketoacyl-[acyl-carrier-protein] synthase III from Neisseria meningitidis serogroup A / serotype 4A (strain DSM 15465 / Z2491).